Reading from the N-terminus, the 207-residue chain is Large ribosomal subunit protein uL4 (207 aa).

The interval 49 to 78 is disordered; it reads HAVKNRSAVRGGGRKPWRQKGTGRARQGSI. A compositionally biased stretch (basic residues) spans 60 to 71; it reads GGRKPWRQKGTG.

Belongs to the universal ribosomal protein uL4 family. Part of the 50S ribosomal subunit.

One of the primary rRNA binding proteins, this protein initially binds near the 5'-end of the 23S rRNA. It is important during the early stages of 50S assembly. It makes multiple contacts with different domains of the 23S rRNA in the assembled 50S subunit and ribosome. In terms of biological role, forms part of the polypeptide exit tunnel. This chain is Large ribosomal subunit protein uL4, found in Latilactobacillus sakei subsp. sakei (strain 23K) (Lactobacillus sakei subsp. sakei).